The primary structure comprises 828 residues: Beta-galactosidase 13 (828 aa).

The N-terminal stretch at 1–23 is a signal peptide; sequence MKTTMAAAATCLVALLVVVLAEA. N-linked (GlcNAc...) asparagine glycosylation is present at Asn157. The Proton donor role is filled by Glu187. N-linked (GlcNAc...) asparagine glycans are attached at residues Asn198 and Asn249. Glu259 acts as the Nucleophile in catalysis. Residues Asn260, Asn362, Asn366, Asn392, Asn502, Asn578, Asn586, and Asn615 are each glycosylated (N-linked (GlcNAc...) asparagine). An SUEL-type lectin domain is found at 746–828; that stretch reads AEVGDAITLS…SGVLTVQASC (83 aa).

It belongs to the glycosyl hydrolase 35 family.

The protein localises to the secreted. Its subcellular location is the extracellular space. The protein resides in the apoplast. The catalysed reaction is Hydrolysis of terminal non-reducing beta-D-galactose residues in beta-D-galactosides.. This chain is Beta-galactosidase 13, found in Oryza sativa subsp. japonica (Rice).